The sequence spans 104 residues: L-rhamnose mutarotase (104 aa).

Position 18 (tyrosine 18) interacts with substrate. The active-site Proton donor is the histidine 22. Residues tyrosine 41 and 76-77 (WW) contribute to the substrate site.

This sequence belongs to the rhamnose mutarotase family. In terms of assembly, homodimer.

It is found in the cytoplasm. It catalyses the reaction alpha-L-rhamnose = beta-L-rhamnose. The protein operates within carbohydrate metabolism; L-rhamnose metabolism. Functionally, involved in the anomeric conversion of L-rhamnose. The polypeptide is L-rhamnose mutarotase (Listeria monocytogenes serotype 4b (strain F2365)).